The primary structure comprises 411 residues: Ferrochelatase, mitochondrial (411 aa).

Residues 1–41 (MAAFRAAHRLLGHILRNESSAGLVTQRWSSSAAVASVPKSS) constitute a mitochondrion transit peptide. A disordered region spans residues 34–55 (VASVPKSSDPKPHAQPDKRKPK). The span at 41 to 51 (SDPKPHAQPDK) shows a compositional bias: basic and acidic residues. Residues Arg-102, Tyr-110, and Ser-117 each coordinate protoporphyrin IX. Cys-183 contributes to the [2Fe-2S] cluster binding site. Active-site residues include His-217 and Asp-370. Cys-390, Cys-393, and Cys-398 together coordinate [2Fe-2S] cluster.

This sequence belongs to the ferrochelatase family. Homodimer. Homotetramer. Requires [2Fe-2S] cluster as cofactor.

Its subcellular location is the mitochondrion inner membrane. The catalysed reaction is heme b + 2 H(+) = protoporphyrin IX + Fe(2+). It functions in the pathway porphyrin-containing compound metabolism; protoheme biosynthesis; protoheme from protoporphyrin-IX: step 1/1. Its function is as follows. Catalyzes the ferrous insertion into protoporphyrin IX. This chain is Ferrochelatase, mitochondrial, found in Xenopus laevis (African clawed frog).